We begin with the raw amino-acid sequence, 130 residues long: Small ribosomal subunit protein uS9 (130 aa).

The protein belongs to the universal ribosomal protein uS9 family.

The sequence is that of Small ribosomal subunit protein uS9 from Carboxydothermus hydrogenoformans (strain ATCC BAA-161 / DSM 6008 / Z-2901).